The sequence spans 126 residues: MRVPVGHTQQLTEGQPAVEVINDDYFLVVVPVPPFTLHLVEFTSGVVSCPTALPATGRARDDDDFRFEVTGLLTNQQLQVAQATPIFDVYLTEVSRDLGHCSSGFHRGNSLAEIAPVSLRRNAQGK.

This is an uncharacterized protein from Columba livia (Rock dove).